We begin with the raw amino-acid sequence, 149 residues long: Ribonuclease H (149 aa).

Residues 5 to 146 (QRPHVVIFTD…ADELAREGLA (142 aa)) form the RNase H type-1 domain. Mg(2+) contacts are provided by aspartate 14, glutamate 52, aspartate 74, and aspartate 138.

The protein belongs to the RNase H family. Monomer. Mg(2+) serves as cofactor.

It localises to the cytoplasm. It catalyses the reaction Endonucleolytic cleavage to 5'-phosphomonoester.. Endonuclease that specifically degrades the RNA of RNA-DNA hybrids. This is Ribonuclease H from Afipia carboxidovorans (strain ATCC 49405 / DSM 1227 / KCTC 32145 / OM5) (Oligotropha carboxidovorans).